A 392-amino-acid chain; its full sequence is Phosphoglycerate kinase (392 aa).

Residues 21 to 23, Arg36, 59 to 62, Arg113, and Arg146 each bind substrate; these read DLN and HLGR. ATP is bound by residues Lys197, Glu319, and 345–348; that span reads GGDT.

It belongs to the phosphoglycerate kinase family. Monomer.

Its subcellular location is the cytoplasm. It catalyses the reaction (2R)-3-phosphoglycerate + ATP = (2R)-3-phospho-glyceroyl phosphate + ADP. It participates in carbohydrate degradation; glycolysis; pyruvate from D-glyceraldehyde 3-phosphate: step 2/5. The polypeptide is Phosphoglycerate kinase (Thioalkalivibrio sulfidiphilus (strain HL-EbGR7)).